The chain runs to 26 residues: Melittin (26 aa).

Gly-1 is subject to N-formylglycine; partial. Residue Gln-26 is modified to Glutamine amide.

It belongs to the melittin family. As to quaternary structure, monomer (in solution and for integration into membranes), homotetramer (in solution and potentially as a toroidal pore in membranes), and potenially homomultimer (as a toroidal pore in membranes). Expressed by the venom gland.

It localises to the secreted. It is found in the target cell membrane. Main toxin of bee venom with strong hemolytic activity and antimicrobial activity. It has enhancing effects on bee venom phospholipase A2 activity. This amphipathic toxin binds to negatively charged membrane surface and forms pore by inserting into lipid bilayers inducing the leakage of ions and molecules and the enhancement of permeability that ultimately leads to cell lysis. It acts as a voltage-gated pore with higher selectivity for anions over cations. The ion conductance has been shown to be voltage-dependent. Self-association of melittin in membranes is promoted by high ionic strength, but not by the presence of negatively charged lipids. In vivo, intradermal injection into healthy human volunteers produce sharp pain sensation and an inflammatory response. It produces pain by activating primary nociceptor cells directly and indirectly due to its ability to activate plasma membrane phospholipase A2 and its pore-forming activity. This chain is Melittin (MELT), found in Apis florea (Dwarf honeybee).